We begin with the raw amino-acid sequence, 317 residues long: Porphobilinogen deaminase (317 aa).

The residue at position 245 (Cys-245) is an S-(dipyrrolylmethanemethyl)cysteine.

It belongs to the HMBS family. Monomer. Requires dipyrromethane as cofactor.

It catalyses the reaction 4 porphobilinogen + H2O = hydroxymethylbilane + 4 NH4(+). It functions in the pathway porphyrin-containing compound metabolism; protoporphyrin-IX biosynthesis; coproporphyrinogen-III from 5-aminolevulinate: step 2/4. It participates in porphyrin-containing compound metabolism; chlorophyll biosynthesis. In terms of biological role, tetrapolymerization of the monopyrrole PBG into the hydroxymethylbilane pre-uroporphyrinogen in several discrete steps. This is Porphobilinogen deaminase from Prochlorococcus marinus (strain MIT 9313).